The primary structure comprises 112 residues: DNA-binding protein TON_1102 (112 aa).

This sequence belongs to the PDCD5 family.

This chain is DNA-binding protein TON_1102, found in Thermococcus onnurineus (strain NA1).